The sequence spans 963 residues: VPS35 endosomal protein-sorting factor-like (963 aa).

The tract at residues 43-112 (SKTKKVSRKG…DKDENSFVGP (70 aa)) is disordered. Residues 51–72 (KGSTSSTSSSSSSSVIDPLSSV) are compositionally biased toward low complexity. Phosphoserine is present on Ser265. Residues 699-719 (AFVRACVAYCFITIPSLVGIF) form a helical membrane-spanning segment.

It belongs to the VPS35L family. In terms of assembly, component of the heterotrimeric retriever complex formed by VPS26C, VPS29 and VPS35L. Interacts with VPS29. Interacts with COMMD1, CCDC93 and CCDC22; associates with the CCC (COMMD/CCDC22/CCDC93) complex which contains at least COMMD1 (and possibly other COMM domain-containing proteins), CCDC22 and CCDC93. Interacts with WASHC1, WASHC2A and WASHC2C. Interacts with SNX17 and SNX31.

The protein localises to the membrane. It localises to the endosome. Its function is as follows. Acts as a component of the retriever complex. The retriever complex is a heterotrimeric complex related to retromer cargo-selective complex (CSC) and essential for retromer-independent retrieval and recycling of numerous cargos such as integrin alpha-5/beta-1 (ITGA5:ITGB1). The recruitment of the retriever complex to the endosomal membrane involves CCC and WASH complexes. In the endosomes, drives the retrieval and recycling of NxxY-motif-containing cargo proteins by coupling to SNX17, a cargo essential for the homeostatic maintenance of numerous cell surface proteins associated with processes that include cell migration, cell adhesion, nutrient supply and cell signaling. Involved in copper-dependent ATP7A trafficking between the trans-Golgi network and vesicles in the cell periphery; the function is proposed to depend on its association with the CCC complex and cooperation with the WASH complex on early endosomes. Seems not to be required for CCC complex stability. The protein is VPS35 endosomal protein-sorting factor-like of Mus musculus (Mouse).